The chain runs to 168 residues: G/U mismatch-specific DNA glycosylase (168 aa).

It belongs to the uracil-DNA glycosylase (UDG) superfamily. TDG/mug family. In terms of assembly, binds DNA as a monomer.

The protein localises to the cytoplasm. It catalyses the reaction Specifically hydrolyzes mismatched double-stranded DNA and polynucleotides, releasing free uracil.. Excises ethenocytosine and uracil, which can arise by alkylation or deamination of cytosine, respectively, from the corresponding mispairs with guanine in ds-DNA. It is capable of hydrolyzing the carbon-nitrogen bond between the sugar-phosphate backbone of the DNA and the mispaired base. The complementary strand guanine functions in substrate recognition. Required for DNA damage lesion repair in stationary-phase cells. This Salmonella dublin (strain CT_02021853) protein is G/U mismatch-specific DNA glycosylase.